We begin with the raw amino-acid sequence, 264 residues long: tRNA (guanine-N(1)-)-methyltransferase (264 aa).

S-adenosyl-L-methionine is bound by residues glycine 125 and leucine 145–leucine 150.

Belongs to the RNA methyltransferase TrmD family. In terms of assembly, homodimer.

It localises to the cytoplasm. It catalyses the reaction guanosine(37) in tRNA + S-adenosyl-L-methionine = N(1)-methylguanosine(37) in tRNA + S-adenosyl-L-homocysteine + H(+). Specifically methylates guanosine-37 in various tRNAs. This is tRNA (guanine-N(1)-)-methyltransferase from Burkholderia vietnamiensis (strain G4 / LMG 22486) (Burkholderia cepacia (strain R1808)).